The primary structure comprises 509 residues: Ribonuclease Y (509 aa).

Residues W3–L23 form a helical membrane-spanning segment. Positions T199–I284 constitute a KH domain. The HD domain occupies V325 to A418.

The protein belongs to the RNase Y family.

The protein localises to the cell membrane. Functionally, endoribonuclease that initiates mRNA decay. In Treponema denticola (strain ATCC 35405 / DSM 14222 / CIP 103919 / JCM 8153 / KCTC 15104), this protein is Ribonuclease Y.